A 351-amino-acid chain; its full sequence is UDP-3-O-acylglucosamine N-acyltransferase (351 aa).

Histidine 240 acts as the Proton acceptor in catalysis.

This sequence belongs to the transferase hexapeptide repeat family. LpxD subfamily. In terms of assembly, homotrimer.

It carries out the reaction a UDP-3-O-[(3R)-3-hydroxyacyl]-alpha-D-glucosamine + a (3R)-hydroxyacyl-[ACP] = a UDP-2-N,3-O-bis[(3R)-3-hydroxyacyl]-alpha-D-glucosamine + holo-[ACP] + H(+). The protein operates within bacterial outer membrane biogenesis; LPS lipid A biosynthesis. Functionally, catalyzes the N-acylation of UDP-3-O-acylglucosamine using 3-hydroxyacyl-ACP as the acyl donor. Is involved in the biosynthesis of lipid A, a phosphorylated glycolipid that anchors the lipopolysaccharide to the outer membrane of the cell. This chain is UDP-3-O-acylglucosamine N-acyltransferase, found in Pseudomonas savastanoi pv. phaseolicola (strain 1448A / Race 6) (Pseudomonas syringae pv. phaseolicola (strain 1448A / Race 6)).